The following is a 624-amino-acid chain: DNA mismatch repair protein MutL (624 aa).

The disordered stretch occupies residues 360 to 396; it reads GGNHFSQPAPRRETASTEPAVARERAPQPAYHSGSGY. Basic and acidic residues predominate over residues 369 to 385; it reads PRRETASTEPAVARERA.

It belongs to the DNA mismatch repair MutL/HexB family.

This protein is involved in the repair of mismatches in DNA. It is required for dam-dependent methyl-directed DNA mismatch repair. May act as a 'molecular matchmaker', a protein that promotes the formation of a stable complex between two or more DNA-binding proteins in an ATP-dependent manner without itself being part of a final effector complex. The chain is DNA mismatch repair protein MutL from Serratia proteamaculans (strain 568).